The primary structure comprises 269 residues: Tryptophan synthase alpha chain (269 aa).

Residues E49 and D60 each act as proton acceptor in the active site.

This sequence belongs to the TrpA family. In terms of assembly, tetramer of two alpha and two beta chains.

It catalyses the reaction (1S,2R)-1-C-(indol-3-yl)glycerol 3-phosphate + L-serine = D-glyceraldehyde 3-phosphate + L-tryptophan + H2O. It functions in the pathway amino-acid biosynthesis; L-tryptophan biosynthesis; L-tryptophan from chorismate: step 5/5. The alpha subunit is responsible for the aldol cleavage of indoleglycerol phosphate to indole and glyceraldehyde 3-phosphate. In Klebsiella aerogenes (Enterobacter aerogenes), this protein is Tryptophan synthase alpha chain.